The sequence spans 251 residues: MNVADLLSHLETLLSSKIFQDYGPNGLQVGDPQTPVKKIAVAVTADLETIKQAVAAEANVLIVHHGIFWKGMPYPITGMIHKRIQLLIEHNIQLIAYHLPLDAHPTLGNNWRVALDLNWHDLKPFGSSLPYLGVQGSFSPIDIDSFIDLLSQYYQAPLKGSALGGPSRVSSAALISGGAYRELSSAATSQVDCFITGNFDEPAWSTALESNINFLAFGHTATEKVGPKSLAEHLKSEFPISTTFIDTANPF.

A divalent metal cation contacts are provided by histidine 64, histidine 65, aspartate 102, histidine 219, and glutamate 223.

The protein belongs to the GTP cyclohydrolase I type 2/NIF3 family. As to quaternary structure, homohexamer.

The polypeptide is GTP cyclohydrolase 1 type 2 homolog (Chlamydia pneumoniae (Chlamydophila pneumoniae)).